A 436-amino-acid chain; its full sequence is GTPase Der (436 aa).

2 EngA-type G domains span residues 3–167 (NIVA…PIKP) and 177–352 (PRFA…ENRQ). Residues 9–16 (GRPNVGKS), 56–60 (DTGGY), 119–122 (NKVD), 183–190 (GRPNAGKS), 230–234 (DTAGI), and 295–298 (NKWD) contribute to the GTP site. The KH-like domain maps to 353 to 436 (QRISTSKFNE…VPIDIYIREK (84 aa)).

The protein belongs to the TRAFAC class TrmE-Era-EngA-EngB-Septin-like GTPase superfamily. EngA (Der) GTPase family. As to quaternary structure, associates with the 50S ribosomal subunit.

Functionally, GTPase that plays an essential role in the late steps of ribosome biogenesis. In Flavobacterium psychrophilum (strain ATCC 49511 / DSM 21280 / CIP 103535 / JIP02/86), this protein is GTPase Der.